The primary structure comprises 178 residues: uncharacterized protein (178 aa).

The chain crosses the membrane as a helical span at residues 7-29 (FFVIFSILWGSLFLFSIIGSLGT).

Its subcellular location is the membrane. This is an uncharacterized protein from Bacillus subtilis (strain 168).